The following is a 399-amino-acid chain: PCI domain-containing protein 2 (399 aa).

An N-acetylalanine modification is found at Ala2. Residue Ser45 is modified to Phosphoserine. The 182-residue stretch at 210–391 (ITYKYYVGRK…QKLVVSKQNP (182 aa)) folds into the PCI domain.

This sequence belongs to the CSN12 family. Component of the nuclear pore complex (NPC)-associated TREX-2 complex (transcription and export complex 2), composed of at least GANP, 2 copies of ENY2, PCID2, SEM1/DSS1, and either centrin CETN2 or centrin CETN3. The TREX-2 complex also associates with ALYREF/ALY and with the nucleoporin NUP153. Interacts with BRCA2. Interacts with SRCAP chromatin remodeling complex component ZNHIT1; the interaction results in inhibition of SRCAP complex activity, preventing the deposition of histone variant H2AZ1/H2A.Z to lymphoid fate regulator genes and restricting lymphoid lineage commitment. Highly expressed in bone marrow and haematopoietic progenitor cells but is almost undetectable in mature blood cells.

It is found in the cytoplasm. Its subcellular location is the nucleus. It localises to the nuclear pore complex. In terms of biological role, required for B-cell survival through the regulation of the expression of cell-cycle checkpoint MAD2L1 protein during B cell differentiation. As a component of the TREX-2 complex, involved in the export of mRNAs to the cytoplasm through the nuclear pores. Binds and stabilizes BRCA2 and is thus involved in the control of R-loop-associated DNA damage and transcription-associated genomic instability. Blocks the activity of the SRCAP chromatin remodeling complex by interacting with SRCAP complex member ZNHIT1 and inhibiting its interaction with the complex. This prevents the deposition of histone variant H2AZ1/H2A.Z at the nucleosomes of key lymphoid fate regulator genes which suppresses their expression and restricts lymphoid lineage commitment. This is PCI domain-containing protein 2 (Pcid2) from Mus musculus (Mouse).